We begin with the raw amino-acid sequence, 117 residues long: Colipase (117 aa).

The N-terminal stretch at 1 to 22 (MNIFNILLPIVVLLLVFGLTAA) is a signal peptide. Disulfide bonds link Cys-39–Cys-50, Cys-45–Cys-61, Cys-49–Cys-83, Cys-71–Cys-91, and Cys-85–Cys-109.

The protein belongs to the colipase family. In terms of assembly, forms a 1:1 stoichiometric complex with pancreatic lipase.

Its subcellular location is the secreted. Colipase is a cofactor of pancreatic lipase. It allows the lipase to anchor itself to the lipid-water interface. Without colipase the enzyme is washed off by bile salts, which have an inhibitory effect on the lipase. The chain is Colipase (clps) from Xenopus tropicalis (Western clawed frog).